The chain runs to 121 residues: B-box domain protein 31 (121 aa).

Residues 26-72 (SVPVRCELCDGDASVFCEADSAFLCRKCDRWVHGANFLAWRHVRRVL) form a B box-type; atypical zinc finger. The PFVFL signature appears at 117–121 (PFVFL).

As to expression, highly expressed in shoot apical meristems and in vascular tissues of leaves. Also detected in petioles.

Developmental regulator acting by forming heterodimeric complexes, that sequester CO and CO-like (COL) proteins into non-functional complexes. Involved in the CO-mediated long-day flowering-promotion pathway. Engages CO and the transcriptional repressor TPL in a tripartite complex. The polypeptide is B-box domain protein 31 (Arabidopsis thaliana (Mouse-ear cress)).